A 479-amino-acid polypeptide reads, in one-letter code: Poly(A) polymerase catalytic subunit (479 aa).

Catalysis depends on residues D202 and D204. The Ca(2+) site is built by D202, D204, and D253.

Belongs to the poxviridae poly(A) polymerase catalytic subunit family. Heterodimer of a large (catalytic) subunit and a small (regulatory) subunit.

It catalyses the reaction RNA(n) + ATP = RNA(n)-3'-adenine ribonucleotide + diphosphate. Its function is as follows. Polymerase that creates the 3'-poly(A) tail of mRNA's. The chain is Poly(A) polymerase catalytic subunit (OPG063) from Bos taurus (Bovine).